Consider the following 236-residue polypeptide: Small ribosomal subunit protein uS2c (236 aa).

It belongs to the universal ribosomal protein uS2 family.

Its subcellular location is the plastid. It is found in the chloroplast. The protein is Small ribosomal subunit protein uS2c (rps2) of Barbarea verna (Land cress).